The chain runs to 526 residues: Peptide chain release factor 3 (526 aa).

The tr-type G domain maps to D9–L277. GTP-binding positions include S18–T25, D86–H90, and N140–D143.

This sequence belongs to the TRAFAC class translation factor GTPase superfamily. Classic translation factor GTPase family. PrfC subfamily.

The protein localises to the cytoplasm. In terms of biological role, increases the formation of ribosomal termination complexes and stimulates activities of RF-1 and RF-2. It binds guanine nucleotides and has strong preference for UGA stop codons. It may interact directly with the ribosome. The stimulation of RF-1 and RF-2 is significantly reduced by GTP and GDP, but not by GMP. This Shewanella baltica (strain OS223) protein is Peptide chain release factor 3.